The chain runs to 321 residues: Porphobilinogen deaminase (321 aa).

At C246 the chain carries S-(dipyrrolylmethanemethyl)cysteine.

This sequence belongs to the HMBS family. As to quaternary structure, monomer. Dipyrromethane is required as a cofactor.

The catalysed reaction is 4 porphobilinogen + H2O = hydroxymethylbilane + 4 NH4(+). It functions in the pathway porphyrin-containing compound metabolism; protoporphyrin-IX biosynthesis; coproporphyrinogen-III from 5-aminolevulinate: step 2/4. Tetrapolymerization of the monopyrrole PBG into the hydroxymethylbilane pre-uroporphyrinogen in several discrete steps. This Helicobacter hepaticus (strain ATCC 51449 / 3B1) protein is Porphobilinogen deaminase.